We begin with the raw amino-acid sequence, 540 residues long: Membrane protein insertase YidC (540 aa).

A helical transmembrane segment spans residues Asn-6–Ala-26. Residues Gln-36–Ala-63 form a disordered region. 4 helical membrane-spanning segments follow: residues Ala-342 to Val-362, Leu-417 to Leu-437, Leu-455 to Ile-475, and Pro-496 to Val-516.

This sequence belongs to the OXA1/ALB3/YidC family. Type 1 subfamily. Interacts with the Sec translocase complex via SecD. Specifically interacts with transmembrane segments of nascent integral membrane proteins during membrane integration.

The protein resides in the cell inner membrane. Functionally, required for the insertion and/or proper folding and/or complex formation of integral membrane proteins into the membrane. Involved in integration of membrane proteins that insert both dependently and independently of the Sec translocase complex, as well as at least some lipoproteins. Aids folding of multispanning membrane proteins. This chain is Membrane protein insertase YidC, found in Vibrio campbellii (strain ATCC BAA-1116).